We begin with the raw amino-acid sequence, 130 residues long: Small ribosomal subunit protein bS16 (130 aa).

Positions 82–130 (VLPKTERNNPKKAVPGKKAQDRAEEKAAKAAEASEAPADEAPAEEAAAE) are disordered. Basic and acidic residues predominate over residues 99 to 110 (KAQDRAEEKAAK). Acidic residues predominate over residues 118 to 130 (PADEAPAEEAAAE).

The protein belongs to the bacterial ribosomal protein bS16 family.

The sequence is that of Small ribosomal subunit protein bS16 from Dinoroseobacter shibae (strain DSM 16493 / NCIMB 14021 / DFL 12).